Consider the following 774-residue polypeptide: Ion-translocating oxidoreductase complex subunit C (774 aa).

4Fe-4S ferredoxin-type domains follow at residues 368 to 398 and 408 to 437; these read ELTS…QQLQ and KCEE…VQYY. [4Fe-4S] cluster is bound by residues cysteine 378, cysteine 381, cysteine 384, cysteine 388, cysteine 417, cysteine 420, cysteine 423, and cysteine 427. Residues 459 to 490 show a composition bias toward basic and acidic residues; it reads ARFEEKKARMERDKAERENRFKQAAEDRRKEM. 2 disordered regions span residues 459–496 and 533–774; these read ARFE…QGGS and AKQA…EEKD. Residues 533 to 545 are compositionally biased toward low complexity; that stretch reads AKQAEAAQSGASE. Positions 550–572 are enriched in basic and acidic residues; that stretch reads EMAKLREERKRQARERKAQKGEV. The span at 605-618 shows a compositional bias: low complexity; the sequence is TESAAQPAQATPSS. 4 stretches are compositionally biased toward polar residues: residues 645-658, 686-698, 725-738, and 762-774; these read TEST…TPSS, ESAA…TPSS, TESA…TPSS, and QQSS…EEKD.

The protein belongs to the 4Fe4S bacterial-type ferredoxin family. RnfC subfamily. As to quaternary structure, the complex is composed of six subunits: RnfA, RnfB, RnfC, RnfD, RnfE and RnfG. [4Fe-4S] cluster serves as cofactor.

The protein resides in the cell inner membrane. Part of a membrane-bound complex that couples electron transfer with translocation of ions across the membrane. The sequence is that of Ion-translocating oxidoreductase complex subunit C from Vibrio cholerae serotype O1 (strain ATCC 39315 / El Tor Inaba N16961).